Reading from the N-terminus, the 426-residue chain is MESLTLQPINKIQGEVNLPGSKSVSNRALLLAALAKGTTRLTNLLDSDDIRHMLNALTKLGVQYQLSEDKTECVVEGLGRPFSVSEPVELFLGNAGTAMRPLAAALCLGEGEYVLTGEPRMKERPIGHLVKALKAAGADVTYLENENYPPLKIVGTGLKPGSVSIDGSISSQFLTAFLMSAPLAEGDIRINIEGELVSKPYIDITLHIMKQFGVDVINNDYQEFVIPVGQQYVAPGDFLVEGDASSASYFLAAAAIKGGEVKVTGIGKNSIQGDIQFADALEKMGADIEWGDDYVISRVGQLKGIDMDYNHIPDAAMTIATTALFAEGTTSIRNVYNWRVKETDRLSAMATELRKVGAEVEEGEDYIIVKPVPQLTHAAIDTYDDHRMAMCFSLVALSDKPVTINDPKCTSKTFPDYFDKLKALSC.

The 3-phosphoshikimate site is built by Lys-22, Ser-23, and Arg-27. Position 22 (Lys-22) interacts with phosphoenolpyruvate. Residues Gly-96 and Arg-124 each coordinate phosphoenolpyruvate. 3-phosphoshikimate contacts are provided by Ser-170, Ser-171, Gln-172, Ser-198, Asp-314, Asn-337, and Lys-341. Residue Gln-172 participates in phosphoenolpyruvate binding. The Proton acceptor role is filled by Asp-314. 3 residues coordinate phosphoenolpyruvate: Arg-345, Arg-387, and Lys-412.

It belongs to the EPSP synthase family. Monomer.

The protein resides in the cytoplasm. It carries out the reaction 3-phosphoshikimate + phosphoenolpyruvate = 5-O-(1-carboxyvinyl)-3-phosphoshikimate + phosphate. It participates in metabolic intermediate biosynthesis; chorismate biosynthesis; chorismate from D-erythrose 4-phosphate and phosphoenolpyruvate: step 6/7. Catalyzes the transfer of the enolpyruvyl moiety of phosphoenolpyruvate (PEP) to the 5-hydroxyl of shikimate-3-phosphate (S3P) to produce enolpyruvyl shikimate-3-phosphate and inorganic phosphate. This is 3-phosphoshikimate 1-carboxyvinyltransferase from Vibrio campbellii (strain ATCC BAA-1116).